Reading from the N-terminus, the 94-residue chain is Large ribosomal subunit protein bL28 (94 aa).

This sequence belongs to the bacterial ribosomal protein bL28 family.

This chain is Large ribosomal subunit protein bL28, found in Hyphomonas neptunium (strain ATCC 15444).